The primary structure comprises 328 residues: Malate dehydrogenase (328 aa).

13-19 provides a ligand contact to NAD(+); that stretch reads GAAGQIS. 2 residues coordinate substrate: Arg94 and Arg100. Residues Asn107, Gln114, and 131–133 each bind NAD(+); that span reads VGN. The substrate site is built by Asn133 and Arg164. His189 (proton acceptor) is an active-site residue.

It belongs to the LDH/MDH superfamily. MDH type 2 family.

It catalyses the reaction (S)-malate + NAD(+) = oxaloacetate + NADH + H(+). Functionally, catalyzes the reversible oxidation of malate to oxaloacetate. The polypeptide is Malate dehydrogenase (Alcanivorax borkumensis (strain ATCC 700651 / DSM 11573 / NCIMB 13689 / SK2)).